Here is a 123-residue protein sequence, read N- to C-terminus: MADLKAFAEQLVNLTVKEVNELASILKDEYGIEPAAAAVVVSGGGDAAAAVEEKTAFDVILKSAGASKLAVVKLVKDLTGLGLKEAKDLVDGAPKPVKEGASKDEAEAIKKQLEEAGAEVEIK.

Belongs to the bacterial ribosomal protein bL12 family. In terms of assembly, homodimer. Part of the ribosomal stalk of the 50S ribosomal subunit. Forms a multimeric L10(L12)X complex, where L10 forms an elongated spine to which 2 to 4 L12 dimers bind in a sequential fashion. Binds GTP-bound translation factors.

Functionally, forms part of the ribosomal stalk which helps the ribosome interact with GTP-bound translation factors. Is thus essential for accurate translation. The sequence is that of Large ribosomal subunit protein bL12 from Cytophaga hutchinsonii (strain ATCC 33406 / DSM 1761 / CIP 103989 / NBRC 15051 / NCIMB 9469 / D465).